A 453-amino-acid polypeptide reads, in one-letter code: Serine incorporator 1 (453 aa).

A lipid anchor (N-myristoyl glycine) is attached at Gly-2. At 2–39 the chain is on the cytoplasmic side; it reads GSVLGLCSVASWIPCLCGSAPCLLCRCCPSGNNSTVTR. Residues 40-60 traverse the membrane as a helical segment; that stretch reads LIYALFLLVGVCVACVMLIPG. At 61–88 the chain is on the lumenal side; sequence MEEQLNKIPGFCENEKGVVPCNILVGYK. Residues 89-109 form a helical membrane-spanning segment; that stretch reads AVYRLCFGLAMFYLLLSLLMI. At 110 to 123 the chain is on the cytoplasmic side; sequence KVKSSSDPRAAVHN. A helical transmembrane segment spans residues 124 to 144; it reads GFWFFKFATAVAIIIGAFFIP. Over 145–151 the chain is Lumenal; it reads EGTFTTV. Residues 152-172 form a helical membrane-spanning segment; that stretch reads WFYVGMAGAFCFILIQLVLLI. The Cytoplasmic segment spans residues 173–197; the sequence is DFAHSWNESWVEKMEEGNSRCWYAA. The chain crosses the membrane as a helical span at residues 198–218; the sequence is LLSATALNYLLSLVAVVLFFV. The Lumenal segment spans residues 219-231; that stretch reads YYTHPASCAENKA. A helical membrane pass occupies residues 232 to 252; sequence FISVNMLLCIGASVMSILPKI. The Cytoplasmic portion of the chain corresponds to 253–259; that stretch reads QESQPRS. Residues 260 to 280 form a helical membrane-spanning segment; sequence GLLQSSVITVYTMYLTWSAMT. The Lumenal portion of the chain corresponds to 281 to 309; it reads NEPETNCNPSLLSIIGFNTTRPIPKDGQS. The helical transmembrane segment at 310–330 threads the bilayer; that stretch reads VQWWHPQGIIGLVLFLLCVFY. At 331 to 387 the chain is on the cytoplasmic side; the sequence is SSIRTSNNSQVNKLTLTSDESTLIEDGNGRSDGSLDDGDGIHRAVDNERDGVTYSYS. Residue Ser-351 is modified to Phosphoserine. The residue at position 352 (Thr-352) is a Phosphothreonine. 2 positions are modified to phosphoserine: Ser-361 and Ser-364. A helical transmembrane segment spans residues 388 to 408; it reads FFHFMLFLASLYIMMTLTNWY. The Lumenal segment spans residues 409–426; sequence RYEPSREMKSQWTAVWVK. Residues 427–447 form a helical membrane-spanning segment; the sequence is ISSSWIGLVLYVWTLVAPLVL. Residues 448–453 are Cytoplasmic-facing; that stretch reads TNRDFD.

It belongs to the TDE1 family. As to quaternary structure, interacts with SPTLC1. Highly expressed in the neuronal populations such as Purkinje cells in the cerebellum, brainstem and spinal motor neurons, locus coeruleus and raphe nuclei.

The protein resides in the endoplasmic reticulum membrane. Enhances the incorporation of serine into phosphatidylserine and sphingolipids. The chain is Serine incorporator 1 (Serinc1) from Mus musculus (Mouse).